The following is a 231-amino-acid chain: LexA repressor (231 aa).

Residues 26 to 46 (FDEMKLALDLRSKSGIHRLIT) constitute a DNA-binding region (H-T-H motif). A disordered region spans residues 79–98 (VGFQPRVIDGDRPDRPRPAN). Residues 86-95 (IDGDRPDRPR) show a composition bias toward basic and acidic residues. Catalysis depends on for autocatalytic cleavage activity residues S152 and K190.

The protein belongs to the peptidase S24 family. In terms of assembly, homodimer.

It catalyses the reaction Hydrolysis of Ala-|-Gly bond in repressor LexA.. In terms of biological role, represses a number of genes involved in the response to DNA damage (SOS response), including recA and lexA. In the presence of single-stranded DNA, RecA interacts with LexA causing an autocatalytic cleavage which disrupts the DNA-binding part of LexA, leading to derepression of the SOS regulon and eventually DNA repair. This Ruegeria pomeroyi (strain ATCC 700808 / DSM 15171 / DSS-3) (Silicibacter pomeroyi) protein is LexA repressor.